The chain runs to 923 residues: Ubiquitin carboxyl-terminal hydrolase 10 (923 aa).

The region spanning F19 to I134 is the DUSP domain. The segment at N65–S91 is disordered. The region spanning A304 to V895 is the USP domain. C313 acts as the Nucleophile in catalysis. H853 acts as the Proton acceptor in catalysis.

The protein belongs to the peptidase C19 family.

It carries out the reaction Thiol-dependent hydrolysis of ester, thioester, amide, peptide and isopeptide bonds formed by the C-terminal Gly of ubiquitin (a 76-residue protein attached to proteins as an intracellular targeting signal).. Its function is as follows. Recognizes and hydrolyzes the peptide bond at the C-terminal Gly of ubiquitin. Involved in the processing of poly-ubiquitin precursors as well as that of ubiquitinated proteins. In Arabidopsis thaliana (Mouse-ear cress), this protein is Ubiquitin carboxyl-terminal hydrolase 10 (UBP10).